Here is a 277-residue protein sequence, read N- to C-terminus: PHD finger protein ALFIN-LIKE 9 (277 aa).

Disordered stretches follow at residues 138-206 and 255-277; these read KSKA…EEEH and PSCS…ARPS. The span at 145–160 shows a compositional bias: low complexity; the sequence is SANNHSNSKSKSSNKT. Residues 208-260 form a PHD-type zinc finger; it reads ETLCGACGESYGADEFWICCDICEKWFHGKCVKITPAKAEHIKQYKCPSCSGG. Residues 259-270 are compositionally biased toward gly residues; the sequence is GGNGGGGGGSGN.

This sequence belongs to the Alfin family. In terms of assembly, interacts with H3K4me3 and to a lesser extent with H3K4me2.

Its subcellular location is the nucleus. Histone-binding component that specifically recognizes H3 tails trimethylated on 'Lys-4' (H3K4me3), which mark transcription start sites of virtually all active genes. This Oryza sativa subsp. indica (Rice) protein is PHD finger protein ALFIN-LIKE 9.